The following is a 103-amino-acid chain: MAAVALNVSTLKPLGDRVLVKIAQQDEKTAGGIFLPDTAKEKPQVGEVVAVGPGKRNDEGKLIPMELKAGDKVLYSKYAGTEVKLGSDEYVLLAERDILAIVQ.

The protein belongs to the GroES chaperonin family. Heptamer of 7 subunits arranged in a ring. Interacts with the chaperonin GroEL.

The protein localises to the cytoplasm. Its function is as follows. Together with the chaperonin GroEL, plays an essential role in assisting protein folding. The GroEL-GroES system forms a nano-cage that allows encapsulation of the non-native substrate proteins and provides a physical environment optimized to promote and accelerate protein folding. GroES binds to the apical surface of the GroEL ring, thereby capping the opening of the GroEL channel. The polypeptide is Co-chaperonin GroES (Synechococcus sp. (strain JA-2-3B'a(2-13)) (Cyanobacteria bacterium Yellowstone B-Prime)).